The sequence spans 520 residues: Cryptochrome DASH (520 aa).

In terms of domain architecture, Photolyase/cryptochrome alpha/beta spans 5 to 141; sequence RTVICLLRND…RVQTFWGSTL (137 aa). The segment at 479–504 is disordered; it reads SRHVNNKSSGPSSSKGRKGSSYTARQ.

Belongs to the DNA photolyase class-1 family. It depends on FAD as a cofactor. The cofactor is (6R)-5,10-methylene-5,6,7,8-tetrahydrofolate.

Functionally, may have a photoreceptor function. Has weak cyclobutyl pyrimidine photolyase activity when expressed in E.coli and when tested in vitro. The polypeptide is Cryptochrome DASH (cry-dash) (Danio rerio (Zebrafish)).